Reading from the N-terminus, the 426-residue chain is Serine--tRNA ligase (426 aa).

231-233 (TAE) is a binding site for L-serine. 262–264 (RSE) is an ATP binding site. Glu285 contributes to the L-serine binding site. 349–352 (EISS) is a binding site for ATP. Ser385 provides a ligand contact to L-serine.

It belongs to the class-II aminoacyl-tRNA synthetase family. Type-1 seryl-tRNA synthetase subfamily. Homodimer. The tRNA molecule binds across the dimer.

It localises to the cytoplasm. It catalyses the reaction tRNA(Ser) + L-serine + ATP = L-seryl-tRNA(Ser) + AMP + diphosphate + H(+). It carries out the reaction tRNA(Sec) + L-serine + ATP = L-seryl-tRNA(Sec) + AMP + diphosphate + H(+). It functions in the pathway aminoacyl-tRNA biosynthesis; selenocysteinyl-tRNA(Sec) biosynthesis; L-seryl-tRNA(Sec) from L-serine and tRNA(Sec): step 1/1. Functionally, catalyzes the attachment of serine to tRNA(Ser). Is also able to aminoacylate tRNA(Sec) with serine, to form the misacylated tRNA L-seryl-tRNA(Sec), which will be further converted into selenocysteinyl-tRNA(Sec). The sequence is that of Serine--tRNA ligase from Lysinibacillus sphaericus (strain C3-41).